The sequence spans 397 residues: Phosphoglycerate kinase (397 aa).

Residues 25–27 (DLN), Arg-41, 64–67 (HLGR), Arg-118, and Arg-151 each bind substrate. Residues Lys-202, Glu-324, and 350–353 (GGDT) contribute to the ATP site.

Belongs to the phosphoglycerate kinase family. In terms of assembly, monomer.

It is found in the cytoplasm. The enzyme catalyses (2R)-3-phosphoglycerate + ATP = (2R)-3-phospho-glyceroyl phosphate + ADP. It participates in carbohydrate degradation; glycolysis; pyruvate from D-glyceraldehyde 3-phosphate: step 2/5. The polypeptide is Phosphoglycerate kinase (Acidovorax ebreus (strain TPSY) (Diaphorobacter sp. (strain TPSY))).